A 178-amino-acid polypeptide reads, in one-letter code: Protein modigliani (178 aa).

As to quaternary structure, probably homodimerizes. Component of the MTV complex, composed of moi/modigliani, tea and ver/verrocchio. Interacts with ver/verrochio and tea (via C-terminus); the interactions are direct and require fully intact moi/modigliani and ver/verrocchio. The MTV complex is recruited to telomeres by the HipHop-HOAP complex, consisting of HipHop, cav/HOAP and Su(var)205/HP1 to form the terminin telomere-capping complex. Interacts with cav/HOAP and Su(var)205/HP1; the interactions are direct. Probably interacts with peo (via N-terminus and UBC domain).

The protein resides in the nucleus. It is found in the chromosome. The protein localises to the telomere. Functionally, part of the MTV complex that associates with the HipHop-HOAP complex to form the terminin telomere-capping complex involved in telomere maintenance and prevention of telomere fusion. Potentially functions downstream of mei-41/ATR. As part of the MTV complex binds single stranded DNA in a sequence-independent manner, protecting it from degradation. This chain is Protein modigliani, found in Drosophila melanogaster (Fruit fly).